The sequence spans 272 residues: NH(3)-dependent NAD(+) synthetase (272 aa).

43–50 is a binding site for ATP; the sequence is GLSGGQDS. Position 49 (Asp-49) interacts with Mg(2+). Arg-138 provides a ligand contact to deamido-NAD(+). Thr-158 contributes to the ATP binding site. Glu-163 serves as a coordination point for Mg(2+). Deamido-NAD(+)-binding residues include Lys-171 and Asp-178. Lys-187 and Thr-209 together coordinate ATP. 258–259 is a deamido-NAD(+) binding site; sequence HK.

The protein belongs to the NAD synthetase family. As to quaternary structure, homodimer.

The enzyme catalyses deamido-NAD(+) + NH4(+) + ATP = AMP + diphosphate + NAD(+) + H(+). It functions in the pathway cofactor biosynthesis; NAD(+) biosynthesis; NAD(+) from deamido-NAD(+) (ammonia route): step 1/1. Its function is as follows. Catalyzes the ATP-dependent amidation of deamido-NAD to form NAD. Uses ammonia as a nitrogen source. In Halalkalibacterium halodurans (strain ATCC BAA-125 / DSM 18197 / FERM 7344 / JCM 9153 / C-125) (Bacillus halodurans), this protein is NH(3)-dependent NAD(+) synthetase.